Consider the following 309-residue polypeptide: Cytidine deaminase (309 aa).

2 CMP/dCMP-type deaminase domains span residues 48-168 (DEDA…FGPR) and 200-309 (DDND…SLSL). 89 to 91 (NME) is a substrate binding site. His102 serves as a coordination point for Zn(2+). Glu104 (proton donor) is an active-site residue. Zn(2+)-binding residues include Cys129 and Cys132.

The protein belongs to the cytidine and deoxycytidylate deaminase family. As to quaternary structure, homodimer. Zn(2+) serves as cofactor.

The catalysed reaction is cytidine + H2O + H(+) = uridine + NH4(+). It carries out the reaction 2'-deoxycytidine + H2O + H(+) = 2'-deoxyuridine + NH4(+). Functionally, this enzyme scavenges exogenous and endogenous cytidine and 2'-deoxycytidine for UMP synthesis. This chain is Cytidine deaminase, found in Sodalis glossinidius (strain morsitans).